Consider the following 299-residue polypeptide: Acetylglutamate kinase (299 aa).

Substrate is bound by residues 72–73 (GG), Arg94, and Asn196.

It belongs to the acetylglutamate kinase family. ArgB subfamily.

The protein resides in the cytoplasm. The catalysed reaction is N-acetyl-L-glutamate + ATP = N-acetyl-L-glutamyl 5-phosphate + ADP. Its pathway is amino-acid biosynthesis; L-arginine biosynthesis; N(2)-acetyl-L-ornithine from L-glutamate: step 2/4. Its function is as follows. Catalyzes the ATP-dependent phosphorylation of N-acetyl-L-glutamate. The protein is Acetylglutamate kinase of Paraburkholderia phymatum (strain DSM 17167 / CIP 108236 / LMG 21445 / STM815) (Burkholderia phymatum).